Here is a 432-residue protein sequence, read N- to C-terminus: Glutamyl-tRNA reductase (432 aa).

Substrate is bound by residues 50–53 (TCNR), Ser110, 115–117 (ETQ), and Gln121. Cys51 serves as the catalytic Nucleophile. Position 190–195 (190–195 (GAGEMS)) interacts with NADP(+).

Belongs to the glutamyl-tRNA reductase family. Homodimer.

The enzyme catalyses (S)-4-amino-5-oxopentanoate + tRNA(Glu) + NADP(+) = L-glutamyl-tRNA(Glu) + NADPH + H(+). It participates in porphyrin-containing compound metabolism; protoporphyrin-IX biosynthesis; 5-aminolevulinate from L-glutamyl-tRNA(Glu): step 1/2. In terms of biological role, catalyzes the NADPH-dependent reduction of glutamyl-tRNA(Glu) to glutamate 1-semialdehyde (GSA). The sequence is that of Glutamyl-tRNA reductase from Aliarcobacter butzleri (strain RM4018) (Arcobacter butzleri).